A 63-amino-acid chain; its full sequence is 2-hydroxymuconate tautomerase (63 aa).

Pro2 (proton acceptor; via imino nitrogen) is an active-site residue.

It belongs to the 4-oxalocrotonate tautomerase family. As to quaternary structure, homohexamer.

It carries out the reaction (2Z,4E)-2-hydroxyhexa-2,4-dienedioate = (3E)-2-oxohex-3-enedioate. It functions in the pathway aromatic compound metabolism; salicylate degradation. Functionally, catalyzes the ketonization of 2-hydroxymuconate stereoselectively to yield 2-oxo-3-hexenedioate. The polypeptide is 2-hydroxymuconate tautomerase (nahJ) (Pseudomonas fluorescens).